The following is a 423-amino-acid chain: MFYTCGPNEAMVVSGFCRSPPVMISGGSVFVFPCVQQIQRISLNTLTLNVKSDKVYTRHGVPVSVTGIAQMKIQGQNKQMLAAKCQMFLGKSESDIAHIALETLEGHQRAIIAHLTVEEIYKDRKKFSEQVFKVASSDLFNMGISVVSYTLKDVHDDQDYLHSLGKARTAQVQKDARIGEAKNKRDAVIREANAIQEKVSAQYMNEIEMAKAQRDYELKKAVYDIEVCTKKAESEMAYQLQVAKTKQQIEEEKMQVMVVERSQQIMLQEQEIARKEKELEAQVMKPADAERYRLEKLAEAERLQLIMEAEAEAESIKMRGEAEAYAVEARGRAEAEQMAKKAEAFQTYKEGAMVDMLMEKLPLIAEEISKPLSATNKVTMVSSGGSEIGAAKLTGEVLDIMTKLPETIEKLTGVSISQVARTG.

It belongs to the band 7/mec-2 family. Flotillin subfamily. As to quaternary structure, heterooligomeric complex of flotillin-1 and flotillin-2 and caveolin-1 and caveolin-2. As to expression, normally expressed in growing retinal exons of newly differentiated ganglion cells at the retinal margin. After optic nerve injury, expressed in all retinal ganglion cells and retinal axons. Also expressed in endothelial cells, spinal cord, larval and adult skin, muscle processes, thymus and gill macrophages.

The protein localises to the cell membrane. It is found in the endosome. Its subcellular location is the membrane. The protein resides in the caveola. It localises to the melanosome. The protein localises to the membrane raft. In terms of biological role, may act as a scaffolding protein within caveolar membranes, functionally participating in formation of caveolae or caveolae-like vesicles. This is Flotillin-1 (flot1) from Carassius auratus (Goldfish).